We begin with the raw amino-acid sequence, 339 residues long: MRVYYDRDADLNLIKGKKVAIIGYGSQGRAHALNLKDSGAKEIAIGLKAGSATAKKVEADGLKVMSVADAAKWADLMMMATPDELQADIYKNEIAPNIRDGAAIAFAHGLNVHFGLIEPKSTVDVVMIAPKGPGHTVRGEYQKGGGVPCLVAVNQDASGNALDLALSYACGVGGGRSGIIETNFREECETDLFGEQVVLCGGLVELIRAGFETLVEAGYAPEMAYFECLHEVKLIVDLIYEGGIANMNYSISNTAEWGEYVSGPRIITAETKAEMKRVLKDIQTGKFTSEWMQEYRAGLSRFKGIRRMNDSHQIEEVGAKLRAMMPWISKNKLVDKAKN.

Positions 1–182 constitute a KARI N-terminal Rossmann domain; the sequence is MRVYYDRDAD…GGGRSGIIET (182 aa). NADP(+) is bound by residues 24–27, lysine 48, serine 51, threonine 53, and 83–86; these read YGSQ and DELQ. The active site involves histidine 108. Glycine 134 provides a ligand contact to NADP(+). Residues 183–328 enclose the KARI C-terminal knotted domain; it reads NFREECETDL…AKLRAMMPWI (146 aa). The Mg(2+) site is built by aspartate 191, glutamate 195, glutamate 227, and glutamate 231. Substrate is bound at residue serine 252.

The protein belongs to the ketol-acid reductoisomerase family. The cofactor is Mg(2+).

It catalyses the reaction (2R)-2,3-dihydroxy-3-methylbutanoate + NADP(+) = (2S)-2-acetolactate + NADPH + H(+). It carries out the reaction (2R,3R)-2,3-dihydroxy-3-methylpentanoate + NADP(+) = (S)-2-ethyl-2-hydroxy-3-oxobutanoate + NADPH + H(+). The protein operates within amino-acid biosynthesis; L-isoleucine biosynthesis; L-isoleucine from 2-oxobutanoate: step 2/4. It functions in the pathway amino-acid biosynthesis; L-valine biosynthesis; L-valine from pyruvate: step 2/4. In terms of biological role, involved in the biosynthesis of branched-chain amino acids (BCAA). Catalyzes an alkyl-migration followed by a ketol-acid reduction of (S)-2-acetolactate (S2AL) to yield (R)-2,3-dihydroxy-isovalerate. In the isomerase reaction, S2AL is rearranged via a Mg-dependent methyl migration to produce 3-hydroxy-3-methyl-2-ketobutyrate (HMKB). In the reductase reaction, this 2-ketoacid undergoes a metal-dependent reduction by NADPH to yield (R)-2,3-dihydroxy-isovalerate. This chain is Ketol-acid reductoisomerase (NADP(+)), found in Mesorhizobium japonicum (strain LMG 29417 / CECT 9101 / MAFF 303099) (Mesorhizobium loti (strain MAFF 303099)).